The primary structure comprises 297 residues: Nucleotide-binding protein BURPS668_0577 (297 aa).

8–15 (GISGSGKS) serves as a coordination point for ATP. Residue 57–60 (DARS) participates in GTP binding.

Belongs to the RapZ-like family.

In terms of biological role, displays ATPase and GTPase activities. This chain is Nucleotide-binding protein BURPS668_0577, found in Burkholderia pseudomallei (strain 668).